The sequence spans 305 residues: tRNA pseudouridine synthase B (305 aa).

Asp50 serves as the catalytic Nucleophile.

This sequence belongs to the pseudouridine synthase TruB family. Type 1 subfamily.

It carries out the reaction uridine(55) in tRNA = pseudouridine(55) in tRNA. Functionally, responsible for synthesis of pseudouridine from uracil-55 in the psi GC loop of transfer RNAs. This chain is tRNA pseudouridine synthase B, found in Rhodococcus jostii (strain RHA1).